The following is an 833-amino-acid chain: Urease (833 aa).

The region spanning 395 to 833 is the Urease domain; it reads GALDVHVHYI…LPLTRRYFVY (439 aa). Positions 400 and 402 each coordinate Ni(2+). Residues His402 and Ala433 each contribute to the urea site. Lys483 lines the Ni(2+) pocket. Lys483 is modified (N6-carboxylysine). Urea is bound by residues His485 and His512. Residues His512 and His538 each contribute to the Ni(2+) site. His586 (proton donor) is an active-site residue. Asp626 contributes to the Ni(2+) binding site. A urea-binding site is contributed by Ala629.

It in the C-terminal section; belongs to the metallo-dependent hydrolases superfamily. Urease alpha subunit family. In terms of assembly, homohexamer. Ni(2+) is required as a cofactor. In terms of processing, carboxylation allows a single lysine to coordinate two nickel ions.

The enzyme catalyses urea + 2 H2O + H(+) = hydrogencarbonate + 2 NH4(+). Its pathway is nitrogen metabolism; urea degradation; CO(2) and NH(3) from urea (urease route): step 1/1. Its activity is regulated as follows. The urease accessory proteins URE4, URE6 and URE7 are required for urease activity, URE7 supplying nickel for the functional urease. Its function is as follows. Plays a nutritional role via nitrogen acquisition in the environment. Contributes to the central nervous system invasion by enhancing yeast sequestration within microcapillary beds (such as within the brain) during hematogenous spread, thereby facilitating blood-to-brain invasion by C.neoformans. Affects fitness within the mammalian phagosome, promoting non-lytic exocytosis while delaying intracellular replication and thus reducing phagolysosomal membrane damage, events that could facilitate cryptococcal dissemination when transported inside macrophages. Urease activity is also associated with the regulation of key intracellular metabolic pathways, including melanin biosynthesis, polyamine biosynthesis, as well as intracellular levels of proline and reactive oxygen species. The chain is Urease from Cryptococcus neoformans var. grubii serotype A (strain H99 / ATCC 208821 / CBS 10515 / FGSC 9487) (Filobasidiella neoformans var. grubii).